A 336-amino-acid polypeptide reads, in one-letter code: Phosphate acetyltransferase (336 aa).

It belongs to the phosphate acetyltransferase and butyryltransferase family.

Its subcellular location is the cytoplasm. The catalysed reaction is acetyl-CoA + phosphate = acetyl phosphate + CoA. The protein operates within metabolic intermediate biosynthesis; acetyl-CoA biosynthesis; acetyl-CoA from acetate: step 2/2. This chain is Phosphate acetyltransferase (pta), found in Treponema pallidum (strain Nichols).